The following is a 257-amino-acid chain: Putative cysteine-rich repeat secretory protein 28 (257 aa).

A signal peptide spans 1 to 26 (MFSTFGSVPILTVVAIQLFLIRNVLS). 2 consecutive Gnk2-homologous domains span residues 32 to 136 (AYLH…TVDS) and 142 to 254 (YEND…LYPF).

It belongs to the cysteine-rich repeat secretory protein family.

It localises to the secreted. In Arabidopsis thaliana (Mouse-ear cress), this protein is Putative cysteine-rich repeat secretory protein 28 (CRRSP28).